The following is a 95-amino-acid chain: Aspartyl/glutamyl-tRNA(Asn/Gln) amidotransferase subunit C (95 aa).

This sequence belongs to the GatC family. As to quaternary structure, heterotrimer of A, B and C subunits.

The enzyme catalyses L-glutamyl-tRNA(Gln) + L-glutamine + ATP + H2O = L-glutaminyl-tRNA(Gln) + L-glutamate + ADP + phosphate + H(+). It carries out the reaction L-aspartyl-tRNA(Asn) + L-glutamine + ATP + H2O = L-asparaginyl-tRNA(Asn) + L-glutamate + ADP + phosphate + 2 H(+). Its function is as follows. Allows the formation of correctly charged Asn-tRNA(Asn) or Gln-tRNA(Gln) through the transamidation of misacylated Asp-tRNA(Asn) or Glu-tRNA(Gln) in organisms which lack either or both of asparaginyl-tRNA or glutaminyl-tRNA synthetases. The reaction takes place in the presence of glutamine and ATP through an activated phospho-Asp-tRNA(Asn) or phospho-Glu-tRNA(Gln). This chain is Aspartyl/glutamyl-tRNA(Asn/Gln) amidotransferase subunit C, found in Paracoccus denitrificans (strain Pd 1222).